The chain runs to 299 residues: GTPase Era (299 aa).

The 168-residue stretch at 4 to 171 folds into the Era-type G domain; the sequence is KSGFVAILGR…VDILSENLDE (168 aa). Residues 12-19 form a G1 region; the sequence is GRPNVGKS. 12-19 is a GTP binding site; the sequence is GRPNVGKS. The segment at 38–42 is G2; sequence QTTRN. The interval 59–62 is G3; it reads DTPG. Residues 59-63 and 121-124 contribute to the GTP site; these read DTPGI and NKID. A G4 region spans residues 121–124; it reads NKID. The G5 stretch occupies residues 150 to 152; it reads ISA. Residues 202–280 enclose the KH type-2 domain; the sequence is TREEIPHSVA…FLETWVKVKK (79 aa).

This sequence belongs to the TRAFAC class TrmE-Era-EngA-EngB-Septin-like GTPase superfamily. Era GTPase family. Monomer.

Its subcellular location is the cytoplasm. It localises to the cell membrane. Its function is as follows. An essential GTPase that binds both GDP and GTP, with rapid nucleotide exchange. Plays a role in 16S rRNA processing and 30S ribosomal subunit biogenesis and possibly also in cell cycle regulation and energy metabolism. The sequence is that of GTPase Era from Streptococcus pneumoniae (strain Hungary19A-6).